Reading from the N-terminus, the 286-residue chain is ATP synthase gamma chain (286 aa).

Belongs to the ATPase gamma chain family. As to quaternary structure, F-type ATPases have 2 components, CF(1) - the catalytic core - and CF(0) - the membrane proton channel. CF(1) has five subunits: alpha(3), beta(3), gamma(1), delta(1), epsilon(1). CF(0) has three main subunits: a, b and c.

It localises to the cell inner membrane. Produces ATP from ADP in the presence of a proton gradient across the membrane. The gamma chain is believed to be important in regulating ATPase activity and the flow of protons through the CF(0) complex. This is ATP synthase gamma chain from Flavobacterium psychrophilum (strain ATCC 49511 / DSM 21280 / CIP 103535 / JIP02/86).